Here is a 453-residue protein sequence, read N- to C-terminus: MGSKFHAFMFPWFGFGHMTAFLHLANKLAEKDHKITFLLPKKARKQLESLNLFPDCIVFQTLTIPSVDGLPDGAETTSDIPISLGSFLASAMDRTRIQVKEAVSVGKPDLIFFDFAHWIPEIAREYGVKSVNFITISAACVAISFVPGRSQDDLGSTPPGYPSSKVLLRGHETNSLSFLSYPFGDGTSFYERIMIGLKNCDVISIRTCQEMEGKFCDFIENQFQRKVLLTGPMLPEPDNSKPLEDQWRQWLSKFDPGSVIYCALGSQIILEKDQFQELCLGMELTGLPFLVAVKPPKGSSTIQEALPKGFEERVKARGVVWGGWVQQPLILAHPSIGCFVSHCGFGSMWEALVNDCQIVFIPHLGEQILNTRLMSEELKVSVEVKREETGWFSKESLSGAVRSVMDRDSELGNWARRNHVKWKESLLRHGLMSGYLNKFVEALEKLVQNINLE.

Residues S266, 325-327, 342-350, and 364-367 contribute to the UDP-alpha-D-glucose site; these read VQQ, HCGFGSMWE, and LGEQ.

It belongs to the UDP-glycosyltransferase family.

The polypeptide is UDP-glycosyltransferase 79B6 (UGT79B6) (Arabidopsis thaliana (Mouse-ear cress)).